A 658-amino-acid chain; its full sequence is MIELVFPDGSKREFPDGVTGREIAAGISKSLEKKAILVEVDGELLDLERPLEKGGAFKILTREAPEALETIRHDVSHILAEAVQELFPGTQVTIGPAIEDGFYYDFAREEPFSLDDLAKIEQRMKEIVDRDEPIRREEWDRDEAIRHFREIGEEYKAQIIEAIPAGEKITVYRQGQWKDLCRGPHLPSTRHAGKAFKLTKLAGAYWRGDHRNAQLQRIYGTAWASEADLEAYIQRLEEAEKRDHRKLGRQMDLFHMQEEGKGMVFWHEKGLTLWRTVESYVRRRLDEAGYQEVRTPQVLDRVFWEKSGHWDKYRPNMFVCETEEGEELSLKPMNCPGHVQIFKFGQKSYRDLPLRMAEFGACHRYEPSGALHGLMRVRAFTQDDAHIFCREDQIEEETARFIELANSIHADFGLERDHIALATRPEVRAGSDEFWDKAEAQMLAAARKAGVEPVIAEGDGAFYAPKLDWVLKDSIGRTWTCGTIQLDYVLPERLGAEYVAEDGSKQRPVMLHRAICGSLERFIGVLIENYAGAFPLWLAPVQVVVATITSDADDYARAAAAELKAKGLRVELDLRNEKINYKVREHSLAKVPVIAVVGRREAEEGKVALRRLGSDGQQILALGEAAEALAMEALPPDLARKRQDGGVQAGLGGEREAG.

The 61-residue stretch at 1–61 folds into the TGS domain; that stretch reads MIELVFPDGS…EKGGAFKILT (61 aa). Residues 243-535 form a catalytic region; that stretch reads DHRKLGRQMD…LIENYAGAFP (293 aa). Residues cysteine 335, histidine 386, and histidine 512 each coordinate Zn(2+).

It belongs to the class-II aminoacyl-tRNA synthetase family. As to quaternary structure, homodimer. It depends on Zn(2+) as a cofactor.

It is found in the cytoplasm. The enzyme catalyses tRNA(Thr) + L-threonine + ATP = L-threonyl-tRNA(Thr) + AMP + diphosphate + H(+). Its function is as follows. Catalyzes the attachment of threonine to tRNA(Thr) in a two-step reaction: L-threonine is first activated by ATP to form Thr-AMP and then transferred to the acceptor end of tRNA(Thr). Also edits incorrectly charged L-seryl-tRNA(Thr). The protein is Threonine--tRNA ligase of Phenylobacterium zucineum (strain HLK1).